A 393-amino-acid chain; its full sequence is Phosphatidate cytidylyltransferase (393 aa).

The next 8 helical transmembrane spans lie at Asn49–Val69, Ile73–Ile93, Ile108–Met128, Leu141–Arg161, Leu171–Phe191, Phe198–Gly218, Gly237–Val257, and Ile290–Ala310.

Belongs to the CDS family.

Its subcellular location is the membrane. It carries out the reaction a 1,2-diacyl-sn-glycero-3-phosphate + CTP + H(+) = a CDP-1,2-diacyl-sn-glycerol + diphosphate. It participates in phospholipid metabolism; CDP-diacylglycerol biosynthesis; CDP-diacylglycerol from sn-glycerol 3-phosphate: step 3/3. The protein is Phosphatidate cytidylyltransferase (CDS1) of Encephalitozoon cuniculi (strain GB-M1) (Microsporidian parasite).